Reading from the N-terminus, the 260-residue chain is Adenosylcobinamide-GDP ribazoletransferase (260 aa).

A run of 7 helical transmembrane segments spans residues 42–62 (TWAL…VYKI), 68–88 (LTPN…TGAL), 118–137 (IGTY…WSAL), 144–166 (WLVT…AFMS), 180–200 (AGAP…LVLT), 201–221 (LALG…AGLI), and 237–257 (ILGA…AAFQ).

The protein belongs to the CobS family. Requires Mg(2+) as cofactor.

Its subcellular location is the cell inner membrane. It carries out the reaction alpha-ribazole + adenosylcob(III)inamide-GDP = adenosylcob(III)alamin + GMP + H(+). It catalyses the reaction alpha-ribazole 5'-phosphate + adenosylcob(III)inamide-GDP = adenosylcob(III)alamin 5'-phosphate + GMP + H(+). It participates in cofactor biosynthesis; adenosylcobalamin biosynthesis; adenosylcobalamin from cob(II)yrinate a,c-diamide: step 7/7. In terms of biological role, joins adenosylcobinamide-GDP and alpha-ribazole to generate adenosylcobalamin (Ado-cobalamin). Also synthesizes adenosylcobalamin 5'-phosphate from adenosylcobinamide-GDP and alpha-ribazole 5'-phosphate. This is Adenosylcobinamide-GDP ribazoletransferase from Bradyrhizobium diazoefficiens (strain JCM 10833 / BCRC 13528 / IAM 13628 / NBRC 14792 / USDA 110).